A 295-amino-acid chain; its full sequence is Trimeric intracellular cation channel type A (295 aa).

Residues 1 to 18 (MEVLDVLNLGEIAQYFSK) lie on the Lumenal side of the membrane. Residues 19–37 (MAMFPVFDVAYYIVSILYL) traverse the membrane as a helical segment. The Cytoplasmic portion of the chain corresponds to 38 to 51 (KYEPGAVEVSRRSP). A helical transmembrane segment spans residues 52–75 (VASWLCAMLYCFGSYILADIMLGV). Position 74 (Gly-74) interacts with Ca(2+). Residues 76–86 (CPIDYFHNNSH) lie on the Lumenal side of the membrane. The helical transmembrane segment at 87–106 (ILLASAVWYLIFFCPLNLFY) threads the bilayer. The Cytoplasmic segment spans residues 107–144 (KCVAFMPVKLVLVALKEVVRTRKIAAGVHHAHHAYHHG). A 1,2-diacyl-sn-glycero-3-phospho-(1D-myo-inositol-4,5-bisphosphate) is bound by residues Lys-122 and Arg-126. A helical transmembrane segment spans residues 145 to 162 (WLIMVITGYVKGSGVALM). Topologically, residues 163-182 (SNFEQLLRGVWKPETNEVLN) are lumenal. The chain crosses the membrane as a helical span at residues 183–199 (MSFPTKASLYGAILFTL). Topologically, residues 200-210 (QEAHVLPVSKS) are cytoplasmic. Residues 211–227 (TLICLFTLFMVSSKVFM) traverse the membrane as a helical segment. The Lumenal portion of the chain corresponds to 228–236 (TARHSHGSP). A helical transmembrane segment spans residues 237 to 255 (FALIESWVCHVLFGSPLGT). The Cytoplasmic portion of the chain corresponds to 256-295 (EDAHDHHHAAPAAAPAPLSPAKNKEELSEGTRKRKSKKAE). The segment at 259 to 295 (HDHHHAAPAAAPAPLSPAKNKEELSEGTRKRKSKKAE) is disordered. A compositionally biased stretch (low complexity) spans 265–276 (APAAAPAPLSPA). Over residues 277 to 286 (KNKEELSEGT) the composition is skewed to basic and acidic residues.

This sequence belongs to the TMEM38 family. As to quaternary structure, homotrimer; conformation seems to be controled by binding to diacylglycerol (DAG).

The protein localises to the sarcoplasmic reticulum membrane. It is found in the nucleus membrane. The catalysed reaction is K(+)(in) = K(+)(out). Its activity is regulated as follows. Channel activity is activated by a change of voltage within the sarcoplasmic reticulum lumen and blocked by luminal high Ca(2+) levels. Functionally, intracellular monovalent cation channel required for maintenance of rapid intracellular calcium release. Acts as a potassium counter-ion channel that functions in synchronization with calcium release from intracellular stores. Opened by a change of voltage within the sarcoplasmic reticulum lumen. This Danio rerio (Zebrafish) protein is Trimeric intracellular cation channel type A (tmem38a).